Here is a 244-residue protein sequence, read N- to C-terminus: uncharacterized protein (244 aa).

The signal sequence occupies residues 1–19 (MRGIFFLILILNFIGLIFS). Residues Asn-45 and Asn-77 are each glycosylated (N-linked (GlcNAc...) asparagine). 2 consecutive ShKT domains span residues 67-105 (CNNP…CGKC) and 113-149 (CSDK…CNRC). 3 disulfide bridges follow: Cys-113–Cys-149, Cys-122–Cys-142, and Cys-129–Cys-146. N-linked (GlcNAc...) asparagine glycans are attached at residues Asn-152 and Asn-158. 2 ShKT domains span residues 171–205 (CTDL…CNAC) and 208–243 (CEDA…CNIC). Cystine bridges form between Cys-171–Cys-205, Cys-178–Cys-198, Cys-185–Cys-202, Cys-208–Cys-243, Cys-215–Cys-236, and Cys-224–Cys-240.

This is an uncharacterized protein from Caenorhabditis elegans.